A 213-amino-acid polypeptide reads, in one-letter code: Orotate phosphoribosyltransferase (213 aa).

Lysine 26 is a 5-phospho-alpha-D-ribose 1-diphosphate binding site. Phenylalanine 34–phenylalanine 35 is an orotate binding site. 5-phospho-alpha-D-ribose 1-diphosphate is bound by residues tyrosine 72 to lysine 73, arginine 99, lysine 100, lysine 103, histidine 105, and aspartate 124 to alanine 132. Orotate-binding residues include threonine 128 and arginine 156.

This sequence belongs to the purine/pyrimidine phosphoribosyltransferase family. PyrE subfamily. As to quaternary structure, homodimer. Mg(2+) is required as a cofactor.

The enzyme catalyses orotidine 5'-phosphate + diphosphate = orotate + 5-phospho-alpha-D-ribose 1-diphosphate. It participates in pyrimidine metabolism; UMP biosynthesis via de novo pathway; UMP from orotate: step 1/2. In terms of biological role, catalyzes the transfer of a ribosyl phosphate group from 5-phosphoribose 1-diphosphate to orotate, leading to the formation of orotidine monophosphate (OMP). This Vibrio parahaemolyticus serotype O3:K6 (strain RIMD 2210633) protein is Orotate phosphoribosyltransferase.